The sequence spans 104 residues: ATP-dependent Clp protease adapter protein ClpS (104 aa).

The protein belongs to the ClpS family. As to quaternary structure, binds to the N-terminal domain of the chaperone ClpA.

Its function is as follows. Involved in the modulation of the specificity of the ClpAP-mediated ATP-dependent protein degradation. This Bordetella bronchiseptica (strain ATCC BAA-588 / NCTC 13252 / RB50) (Alcaligenes bronchisepticus) protein is ATP-dependent Clp protease adapter protein ClpS.